The sequence spans 275 residues: Dermonecrotic toxin SpeSicTox-betaIIA2ii (275 aa).

H5 is an active-site residue. Mg(2+) contacts are provided by E25 and D27. Residue H41 is the Nucleophile of the active site. Disulfide bonds link C45–C51 and C47–C190. D85 contacts Mg(2+).

This sequence belongs to the arthropod phospholipase D family. Class II subfamily. The cofactor is Mg(2+). In terms of tissue distribution, expressed by the venom gland.

The protein localises to the secreted. The enzyme catalyses an N-(acyl)-sphingosylphosphocholine = an N-(acyl)-sphingosyl-1,3-cyclic phosphate + choline. The catalysed reaction is an N-(acyl)-sphingosylphosphoethanolamine = an N-(acyl)-sphingosyl-1,3-cyclic phosphate + ethanolamine. It carries out the reaction a 1-acyl-sn-glycero-3-phosphocholine = a 1-acyl-sn-glycero-2,3-cyclic phosphate + choline. It catalyses the reaction a 1-acyl-sn-glycero-3-phosphoethanolamine = a 1-acyl-sn-glycero-2,3-cyclic phosphate + ethanolamine. Functionally, dermonecrotic toxins cleave the phosphodiester linkage between the phosphate and headgroup of certain phospholipids (sphingolipid and lysolipid substrates), forming an alcohol (often choline) and a cyclic phosphate. This toxin acts on sphingomyelin (SM). It may also act on ceramide phosphoethanolamine (CPE), lysophosphatidylcholine (LPC) and lysophosphatidylethanolamine (LPE), but not on lysophosphatidylserine (LPS), and lysophosphatidylglycerol (LPG). It acts by transphosphatidylation, releasing exclusively cyclic phosphate products as second products. Induces dermonecrosis, hemolysis, increased vascular permeability, edema, inflammatory response, and platelet aggregation. The polypeptide is Dermonecrotic toxin SpeSicTox-betaIIA2ii (Sicarius peruensis (Six-eyed sand spider)).